The following is a 153-amino-acid chain: S-ribosylhomocysteine lyase (153 aa).

Fe cation is bound by residues His57, His61, and Cys124.

Belongs to the LuxS family. As to quaternary structure, homodimer. The cofactor is Fe cation.

The enzyme catalyses S-(5-deoxy-D-ribos-5-yl)-L-homocysteine = (S)-4,5-dihydroxypentane-2,3-dione + L-homocysteine. In terms of biological role, involved in the synthesis of autoinducer 2 (AI-2) which is secreted by bacteria and is used to communicate both the cell density and the metabolic potential of the environment. The regulation of gene expression in response to changes in cell density is called quorum sensing. Catalyzes the transformation of S-ribosylhomocysteine (RHC) to homocysteine (HC) and 4,5-dihydroxy-2,3-pentadione (DPD). This is S-ribosylhomocysteine lyase from Oceanobacillus iheyensis (strain DSM 14371 / CIP 107618 / JCM 11309 / KCTC 3954 / HTE831).